Here is a 343-residue protein sequence, read N- to C-terminus: UDP-3-O-acylglucosamine N-acyltransferase 2 (343 aa).

The active-site Proton acceptor is the histidine 251.

This sequence belongs to the transferase hexapeptide repeat family. LpxD subfamily. As to quaternary structure, homotrimer.

It catalyses the reaction a UDP-3-O-[(3R)-3-hydroxyacyl]-alpha-D-glucosamine + a (3R)-hydroxyacyl-[ACP] = a UDP-2-N,3-O-bis[(3R)-3-hydroxyacyl]-alpha-D-glucosamine + holo-[ACP] + H(+). It functions in the pathway bacterial outer membrane biogenesis; LPS lipid A biosynthesis. Its function is as follows. Catalyzes the N-acylation of UDP-3-O-acylglucosamine using 3-hydroxyacyl-ACP as the acyl donor. Is involved in the biosynthesis of lipid A, a phosphorylated glycolipid that anchors the lipopolysaccharide to the outer membrane of the cell. The protein is UDP-3-O-acylglucosamine N-acyltransferase 2 of Legionella pneumophila (strain Paris).